Here is a 282-residue protein sequence, read N- to C-terminus: HTH-type transcriptional activator RhaR (282 aa).

Positions 179 to 277 (DKLITALANS…GMTPSQWRHL (99 aa)) constitute an HTH araC/xylS-type domain. DNA-binding regions (H-T-H motif) lie at residues 196-217 (DAFCQQEQCSERVLRQQFRAQT) and 244-267 (ISEISMQCGFEDSNYFSVVFTRET).

Binds DNA as a dimer.

The protein resides in the cytoplasm. In terms of biological role, activates expression of the rhaSR operon in response to L-rhamnose. The sequence is that of HTH-type transcriptional activator RhaR from Salmonella dublin (strain CT_02021853).